The sequence spans 390 residues: ATP-sensitive inward rectifier potassium channel 11 (390 aa).

Over 1 to 65 (MLSRKGIIPE…LQDVFTTLVD (65 aa)) the chain is Cytoplasmic. ATP-binding residues include Asn-48 and Arg-50. Residues 66–92 (LKWPHTLLIFTMSFLCSWLLFAMVWWL) form a helical membrane-spanning segment. At 93-116 (IAFAHGDLAPGEGTTVPCVTSIHS) the chain is on the extracellular side. Cys-110 and Cys-142 form a disulfide bridge. The discontinuously helical; Pore-forming intramembrane region spans 117–133 (FSSAFLFSIEVQVTIGF). K(+) contacts are provided by Thr-130 and Phe-133. A Selectivity filter motif is present at residues 130-135 (TIGFGG). Topologically, residues 134 to 142 (GGRMVTEEC) are extracellular. Residues 143 to 171 (PLAILILIVQNIVGLMINAIMLGCIFMKT) traverse the membrane as a helical segment. Topologically, residues 172–390 (SQAHRRAETL…RFSISPDSLS (219 aa)) are cytoplasmic. A 1,2-diacyl-sn-glycero-3-phospho-(1D-myo-inositol-4,5-bisphosphate) is bound at residue Arg-176. Tyr-330 provides a ligand contact to ATP. At Thr-341 the chain carries Phosphothreonine; by MAPK1. Ser-385 carries the phosphoserine; by MAPK1 modification.

Belongs to the inward rectifier-type potassium channel (TC 1.A.2.1) family. KCNJ11 subfamily. As to quaternary structure, homotetramer; the homotetramer binds four ATP molecules (one ATP per subunit). Forms an heterooctamer with ABCC8/SUR1; one KCNJ11 homotetramer interacts with four ABCC8/SUR1 molecules. Interacts with ABCC9/SUR2. Post-translationally, phosphorylation by MAPK1 results in changes in channel gating that destabilize the closed states and reduce the ATP sensitivity.

Its subcellular location is the membrane. It carries out the reaction K(+)(in) = K(+)(out). Its activity is regulated as follows. KATP channels are regulated by cytoplasmic ATP/ADP ratios; ATP inhibits the channel by closing the pore, while ADP activates the channel. Activated by phosphatidylinositol 4,5-biphosphate (PtdIns(4,5)P2). Functionally, inward rectifier potassium channel that forms the pore of ATP-sensitive potassium channels (KATP), regulating potassium permeability as a function of cytoplasmic ATP and ADP concentrations in many different cells. Inward rectifier potassium channels are characterized by a greater tendency to allow potassium to flow into the cell rather than out of it. Their voltage dependence is regulated by the concentration of extracellular potassium; as external potassium is raised, the voltage range of the channel opening shifts to more positive voltages. The inward rectification is mainly due to the blockage of outward current by internal magnesium. Can be blocked by extracellular barium. In pancreatic cells, it forms KATP channels with ABCC8/SUR1. Can form cardiac and smooth muscle-type KATP channels with ABCC9. This Cavia porcellus (Guinea pig) protein is ATP-sensitive inward rectifier potassium channel 11 (KCNJ11).